A 726-amino-acid polypeptide reads, in one-letter code: Elongation factor 2 (726 aa).

The tr-type G domain occupies 19–260 (DRIRNIGICA…MVIKHLPSPP (242 aa)). Residues 28–35 (AHIDHGKT), 94–98 (DTPGH), and 148–151 (NKVD) each bind GTP. His602 bears the Diphthamide mark.

The protein belongs to the TRAFAC class translation factor GTPase superfamily. Classic translation factor GTPase family. EF-G/EF-2 subfamily.

It localises to the cytoplasm. Catalyzes the GTP-dependent ribosomal translocation step during translation elongation. During this step, the ribosome changes from the pre-translocational (PRE) to the post-translocational (POST) state as the newly formed A-site-bound peptidyl-tRNA and P-site-bound deacylated tRNA move to the P and E sites, respectively. Catalyzes the coordinated movement of the two tRNA molecules, the mRNA and conformational changes in the ribosome. The protein is Elongation factor 2 (fusA) of Methanocaldococcus jannaschii (strain ATCC 43067 / DSM 2661 / JAL-1 / JCM 10045 / NBRC 100440) (Methanococcus jannaschii).